Here is a 359-residue protein sequence, read N- to C-terminus: Agropine synthesis conjugase (359 aa).

Positions 28-171 constitute an SIS domain; that stretch reads TVAKFGRATA…IGGILNEREN (144 aa).

This chain is Agropine synthesis conjugase (mas2), found in Rhizobium rhizogenes (Agrobacterium rhizogenes).